The chain runs to 363 residues: Chorismate synthase (363 aa).

NADP(+) contacts are provided by Arg-48 and Arg-54. FMN-binding positions include 125–127, 237–238, Gly-277, 292–296, and Arg-318; these read RSS, NA, and KPTSS.

Belongs to the chorismate synthase family. Homotetramer. FMNH2 serves as cofactor.

The enzyme catalyses 5-O-(1-carboxyvinyl)-3-phosphoshikimate = chorismate + phosphate. It functions in the pathway metabolic intermediate biosynthesis; chorismate biosynthesis; chorismate from D-erythrose 4-phosphate and phosphoenolpyruvate: step 7/7. Functionally, catalyzes the anti-1,4-elimination of the C-3 phosphate and the C-6 proR hydrogen from 5-enolpyruvylshikimate-3-phosphate (EPSP) to yield chorismate, which is the branch point compound that serves as the starting substrate for the three terminal pathways of aromatic amino acid biosynthesis. This reaction introduces a second double bond into the aromatic ring system. This Pseudomonas putida (strain GB-1) protein is Chorismate synthase.